A 443-amino-acid polypeptide reads, in one-letter code: Ribulose bisphosphate carboxylase large chain (443 aa).

The substrate site is built by asparagine 89 and threonine 139. Lysine 141 functions as the Proton acceptor in the catalytic mechanism. Lysine 143 serves as a coordination point for substrate. Lysine 167, aspartate 169, and glutamate 170 together coordinate Mg(2+). An N6-carboxylysine modification is found at lysine 167. Histidine 260 functions as the Proton acceptor in the catalytic mechanism. Positions 261, 293, and 345 each coordinate substrate.

It belongs to the RuBisCO large chain family. Type I subfamily. Heterohexadecamer of 8 large chains and 8 small chains; disulfide-linked. The disulfide link is formed within the large subunit homodimers. Requires Mg(2+) as cofactor. The disulfide bond which can form in the large chain dimeric partners within the hexadecamer appears to be associated with oxidative stress and protein turnover.

It is found in the plastid. Its subcellular location is the chloroplast. The catalysed reaction is 2 (2R)-3-phosphoglycerate + 2 H(+) = D-ribulose 1,5-bisphosphate + CO2 + H2O. It carries out the reaction D-ribulose 1,5-bisphosphate + O2 = 2-phosphoglycolate + (2R)-3-phosphoglycerate + 2 H(+). Functionally, ruBisCO catalyzes two reactions: the carboxylation of D-ribulose 1,5-bisphosphate, the primary event in carbon dioxide fixation, as well as the oxidative fragmentation of the pentose substrate in the photorespiration process. Both reactions occur simultaneously and in competition at the same active site. This is Ribulose bisphosphate carboxylase large chain from Sesamum indicum (Oriental sesame).